The primary structure comprises 298 residues: 4-nitrophenylphosphatase (298 aa).

In terms of assembly, homodimer. The N-terminus is blocked.

The catalysed reaction is 4-nitrophenyl phosphate + H2O = 4-nitrophenol + phosphate + H(+). With respect to regulation, activity enhanced by Mg(2+) ion but inhibited by Zn(2+) ion. The sequence is that of 4-nitrophenylphosphatase (pho2) from Schizosaccharomyces pombe (strain 972 / ATCC 24843) (Fission yeast).